The chain runs to 416 residues: Gamma-glutamyl phosphate reductase (416 aa).

It belongs to the gamma-glutamyl phosphate reductase family.

Its subcellular location is the cytoplasm. The catalysed reaction is L-glutamate 5-semialdehyde + phosphate + NADP(+) = L-glutamyl 5-phosphate + NADPH + H(+). The protein operates within amino-acid biosynthesis; L-proline biosynthesis; L-glutamate 5-semialdehyde from L-glutamate: step 2/2. Catalyzes the NADPH-dependent reduction of L-glutamate 5-phosphate into L-glutamate 5-semialdehyde and phosphate. The product spontaneously undergoes cyclization to form 1-pyrroline-5-carboxylate. This is Gamma-glutamyl phosphate reductase from Glaesserella parasuis serovar 5 (strain SH0165) (Haemophilus parasuis).